The chain runs to 1466 residues: Collagen alpha-1(III) chain (1466 aa).

Residues 1 to 23 (MMSFVQKGSWLLLALLHPTIILA) form the signal peptide. Residues 24–153 (QQEAVEGGCS…CPTGPQNYSP (130 aa)) constitute a propeptide, N-terminal propeptide. One can recognise a VWFC domain in the interval 30 to 89 (GGCSHLGQSYADRDVWKPEPCQICVCDSGSVLCDDIICDDQELDCPNPEIPFGECCAVCP). Residues 95-1194 (PTRPPNGQGP…GPPGPPGAPG (1100 aa)) are disordered. The span at 99–108 (PNGQGPQGPK) shows a compositional bias: low complexity. Polar residues predominate over residues 146 to 155 (TGPQNYSPQY). The interval 149–167 (QNYSPQYDSYDVKSGVAVG) is nonhelical region (N-terminal). Positions 168–1196 (GLAGYPGPAG…PGPPGAPGPC (1029 aa)) are triple-helical region. Residues Pro173, Pro179, Pro182, Pro185, Pro191, Pro194, Pro197, Pro203, Pro206, Pro215, Pro218, Pro236, Pro239, Pro245, Pro248, Pro257, and Pro260 each carry the 4-hydroxyproline modification. Residues 175–185 (PAGPPGPPGPP) are compositionally biased toward pro residues. Residues 187 to 199 (TSGHPGSPGSPGY) show a composition bias toward low complexity. Over residues 229-241 (KDGESGRPGRPGE) the composition is skewed to basic and acidic residues. The span at 251–260 (KGPAGIPGFP) shows a compositional bias: low complexity. At Lys263 the chain carries 5-hydroxylysine; alternate. Lys263 is a glycosylation site (O-linked (Gal...) hydroxylysine; alternate). Residues 266 to 277 (RGFDGRNGEKGE) show a composition bias toward basic and acidic residues. 4-hydroxyproline is present on Pro281. Residue Lys284 is modified to 5-hydroxylysine. 4-hydroxyproline is present on residues Pro290, Pro296, Pro305, Pro311, Pro314, Pro332, Pro335, Pro338, Pro344, Pro347, Pro359, Pro365, Pro371, Pro383, Pro386, Pro392, Pro404, Pro407, Pro416, Pro425, Pro434, Pro443, Pro455, Pro458, Pro470, Pro473, Pro479, Pro488, Pro500, Pro512, Pro524, Pro530, Pro533, Pro539, Pro542, Pro545, Pro551, Pro554, Pro563, Pro566, Pro575, Pro581, Pro590, Pro599, Pro602, Pro608, Pro620, Pro635, Pro644, Pro650, Pro656, Pro659, Pro661, Pro668, Pro671, Pro680, Pro686, Pro692, Pro701, Pro703, Pro713, Pro716, Pro722, Pro728, Pro737, Pro746, Pro749, Pro755, Pro770, Pro776, Pro785, Pro788, Pro797, Pro806, Pro812, Pro815, Pro821, Pro830, Pro839, Pro845, and Pro854. Low complexity predominate over residues 311-322 (PGLPGAAGARGN). Low complexity predominate over residues 355–380 (PAGSPGSNGAPGQRGEPGPQGHAGAQ). A compositionally biased stretch (gly residues) spans 390–399 (GSPGGKGEMG). Residues 404-425 (PGAPGLMGARGPPGPAGANGAP) are compositionally biased toward low complexity. Residues 426 to 435 (GLRGGAGEPG) show a composition bias toward gly residues. The span at 478 to 523 (LPGAAGERGAPGFRGPAGPNGIPGEKGPAGERGAPGPAGPRGAAGE) shows a compositional bias: low complexity. Residues 528–549 (GVPGGPGMRGMPGSPGGPGSDG) show a composition bias toward gly residues. Positions 642–651 (GLPGTGGPPG) are enriched in gly residues. Residues 669–678 (GAPGGKGDAG) are compositionally biased toward gly residues. Residues 679–692 (APGERGPPGLAGAP) are compositionally biased toward low complexity. Over residues 693-711 (GLRGGAGPPGPEGGKGAAG) the composition is skewed to gly residues. Residues 729–738 (GERGGLGSPG) are compositionally biased toward gly residues. Residues 787–796 (LPGIAGPRGS) are compositionally biased toward low complexity. The segment covering 823–835 (GKGERGAPGEKGE) has biased composition (basic and acidic residues). A compositionally biased stretch (gly residues) spans 836-850 (GGPPGVAGPPGGSGP). Lys860 carries the post-translational modification 5-hydroxylysine. Residues 864-873 (GSPGGPGAAG) are compositionally biased toward gly residues. A 4-hydroxyproline mark is found at Pro866, Pro869, Pro875, Pro881, Pro884, Pro890, Pro892, Pro899, Pro905, Pro914, Pro917, Pro929, Pro935, Pro941, and Pro944. The segment covering 890–907 (PGPPGPSGSPGKDGPPGP) has biased composition (pro residues). The segment covering 908–917 (AGNTGAPGSP) has biased composition (low complexity). The segment covering 946–961 (PLGIAGITGARGLAGP) has biased composition (low complexity). Residues Pro962, Pro965, and Pro971 each carry the 4-hydroxyproline modification. Lys977 bears the 5-hydroxylysine mark. Pro983, Pro995, Pro1001, Pro1010, Pro1016, Pro1022, Pro1028, Pro1040, Pro1043, Pro1046, Pro1049, Pro1052, Pro1076, and Pro1085 each carry 4-hydroxyproline. Residues 1046–1055 (PGHPGPPGPV) show a composition bias toward pro residues. Residues 1067–1085 (SGPAGPAGAPGPAGSRGAP) show a composition bias toward low complexity. Residue Lys1106 is modified to 5-hydroxylysine. Residues Pro1112, Pro1115, Pro1118, Pro1121, Pro1133, Pro1148, Pro1157, Pro1163, Pro1178, Pro1181, Pro1184, Pro1187, Pro1190, and Pro1193 each carry the 4-hydroxyproline modification. Low complexity predominate over residues 1123–1133 (PAGQQGAIGSP). Over residues 1181 to 1193 (PGQPGPPGPPGAP) the composition is skewed to pro residues. Residues 1197–1205 (CGGVGAAAI) form a nonhelical region (C-terminal) region. Positions 1222 to 1466 (DEPMDFKINT…GVDVGPVCFL (245 aa)) are cleaved as a propeptide — C-terminal propeptide. One can recognise a Fibrillar collagen NC1 domain in the interval 1232 to 1466 (DEIMTSLKSV…GVDVGPVCFL (235 aa)). 3 disulfides stabilise this stretch: Cys1262–Cys1294, Cys1302–Cys1464, and Cys1372–Cys1417. The Ca(2+) site is built by Asp1280, Asn1282, Gln1283, Cys1285, and Asp1288.

The protein belongs to the fibrillar collagen family. In terms of assembly, trimers of identical alpha 1(III) chains. The chains are linked to each other by interchain disulfide bonds. Trimers are also cross-linked via hydroxylysines. Interacts with ADGRG1. In terms of processing, proline residues at the third position of the tripeptide repeating unit (G-X-Y) are hydroxylated in some or all of the chains. O-linked glycan consists of a Glc-Gal disaccharide bound to the oxygen atom of a post-translationally added hydroxyl group.

The protein localises to the secreted. The protein resides in the extracellular space. It localises to the extracellular matrix. In terms of biological role, collagen type III occurs in most soft connective tissues along with type I collagen. Involved in regulation of cortical development. Is the major ligand of ADGRG1 in the developing brain and binding to ADGRG1 inhibits neuronal migration and activates the RhoA pathway by coupling ADGRG1 to GNA13 and possibly GNA12. The protein is Collagen alpha-1(III) chain (COL3A1) of Homo sapiens (Human).